We begin with the raw amino-acid sequence, 201 residues long: Adenylyl-sulfate kinase (201 aa).

35 to 42 (GLSGSGKS) contributes to the ATP binding site. Ser-109 serves as the catalytic Phosphoserine intermediate.

This sequence belongs to the APS kinase family.

The enzyme catalyses adenosine 5'-phosphosulfate + ATP = 3'-phosphoadenylyl sulfate + ADP + H(+). It participates in sulfur metabolism; hydrogen sulfide biosynthesis; sulfite from sulfate: step 2/3. Functionally, catalyzes the synthesis of activated sulfate. The polypeptide is Adenylyl-sulfate kinase (Shigella flexneri).